Here is a 48-residue protein sequence, read N- to C-terminus: Sperm protamine R3 isoform 2 (48 aa).

Residues 1-29 (ARRRHSMKKKRKSVRRRKTRKNQRKRKNS) show a composition bias toward basic residues. The interval 1 to 48 (ARRRHSMKKKRKSVRRRKTRKNQRKRKNSLGRSFKAHGFLKQPPRFRP) is disordered.

Testis.

The protein localises to the nucleus. The protein resides in the chromosome. Protamines substitute for histones in the chromatin of sperm during the haploid phase of spermatogenesis. They compact sperm DNA into a highly condensed, stable and inactive complex. The polypeptide is Sperm protamine R3 isoform 2 (Hydrolagus colliei (Spotted ratfish)).